The chain runs to 320 residues: N-acetylneuraminate lyase (320 aa).

Aceneuramate-binding residues include threonine 51 and threonine 52. Tyrosine 143 functions as the Proton donor in the catalytic mechanism. Lysine 173 functions as the Schiff-base intermediate with substrate in the catalytic mechanism. Residues serine 175, glycine 199, aspartate 201, glutamate 202, and serine 218 each coordinate aceneuramate.

Belongs to the DapA family. NanA subfamily. In terms of assembly, homotetramer.

It is found in the cytoplasm. It catalyses the reaction aceneuramate = aldehydo-N-acetyl-D-mannosamine + pyruvate. Its pathway is amino-sugar metabolism; N-acetylneuraminate degradation. Functionally, catalyzes the cleavage of N-acetylneuraminic acid (sialic acid) to form pyruvate and N-acetylmannosamine via a Schiff base intermediate. It prevents sialic acids from being recycled and returning to the cell surface. Involved in the N-glycolylneuraminic acid (Neu5Gc) degradation pathway. The chain is N-acetylneuraminate lyase from Rattus norvegicus (Rat).